We begin with the raw amino-acid sequence, 828 residues long: Transcription factor SOX-6 (828 aa).

The disordered stretch occupies residues 1 to 51 (MSSKQATSPFACAADGEDAMTQDLTSREKEEGSDQHVASHLPLHPIMHNKP). The segment covering 25-34 (TSREKEEGSD) has biased composition (basic and acidic residues). T119 carries the post-translational modification Phosphothreonine. The stretch at 184 to 262 (LAEKERQLST…LLQQQIQVQG (79 aa)) forms a coiled coil. A disordered region spans residues 380 to 470 (SPGAKMPSTP…KSSIPSPIGG (91 aa)). Residues 393-402 (NTAGTVSPTG) are compositionally biased toward polar residues. At S399 the chain carries Phosphoserine. A Phosphothreonine modification is found at T401. Glycyl lysine isopeptide (Lys-Gly) (interchain with G-Cter in SUMO) cross-links involve residues K404 and K417. A phosphoserine mark is found at S439 and S442. Residues 439–461 (SPTSPTQNLFPASKTSPVNLPNK) are compositionally biased toward polar residues. Positions 621 to 689 (IKRPMNAFMV…IHLEKYPNYK (69 aa)) form a DNA-binding region, HMG box. Positions 753 to 781 (TPSPQMTSDCSSTSASPEPSLPVIQSTYG) are enriched in polar residues. The tract at residues 753 to 828 (TPSPQMTSDC…NEAPEAVSAN (76 aa)) is disordered. A compositionally biased stretch (acidic residues) spans 796 to 809 (NGEDEMEMYDDYED).

Homodimer. Interacts with DAZAP2. May interact with CENPK. In terms of processing, sumoylation inhibits the transcriptional activity. Expressed in a wide variety of tissues, most abundantly in skeletal musclen.

It localises to the nucleus. The protein localises to the cytoplasm. In terms of biological role, transcription factor that plays a key role in several developmental processes, including neurogenesis, chondrocytes differentiation and cartilage formation. Specifically binds the 5'-AACAAT-3' DNA motif present in enhancers and super-enhancers and promotes expression of genes important for chondrogenesis. Required for overt chondrogenesis when condensed prechondrocytes differentiate into early stage chondrocytes: SOX5 and SOX6 cooperatively bind with SOX9 on active enhancers and super-enhancers associated with cartilage-specific genes, and thereby potentiate SOX9's ability to transactivate. Not involved in precartilaginous condensation, the first step in chondrogenesis, during which skeletal progenitors differentiate into prechondrocytes. Together with SOX5, required to form and maintain a pool of highly proliferating chondroblasts between epiphyses and metaphyses, to form columnar chondroblasts, delay chondrocyte prehypertrophy but promote hypertrophy, and to delay terminal differentiation of chondrocytes on contact with ossification fronts. Binds to the proximal promoter region of the myelin protein MPZ gene, and is thereby involved in the differentiation of oligodendroglia in the developing spinal tube. Binds to the gene promoter of MBP and acts as a transcriptional repressor. In Homo sapiens (Human), this protein is Transcription factor SOX-6.